Consider the following 122-residue polypeptide: Glycine cleavage system H protein (122 aa).

A Lipoyl-binding domain is found at Val-19–Thr-101. Position 60 is an N6-lipoyllysine (Lys-60).

Belongs to the GcvH family. The glycine cleavage system is composed of four proteins: P, T, L and H. It depends on (R)-lipoate as a cofactor.

Its function is as follows. The glycine cleavage system catalyzes the degradation of glycine. The H protein shuttles the methylamine group of glycine from the P protein to the T protein. The chain is Glycine cleavage system H protein from Bartonella quintana (strain Toulouse) (Rochalimaea quintana).